Here is a 208-residue protein sequence, read N- to C-terminus: AN1-type zinc finger protein 6 (208 aa).

An A20-type zinc finger spans residues 8 to 42 (SQVPMLCSTGCGFYGNPRTNGMCSVCYKEHLQRQN). Residues C14, C18, C30, and C33 each coordinate Zn(2+). The segment covering 41 to 68 (QNSSNGRISPPATSVSSLSESLPVQCTD) has biased composition (polar residues). Residues 41-140 (QNSSNGRISP…PSEEQSKSLE (100 aa)) form a disordered region. S49 bears the Phosphoserine mark. Over residues 80-94 (STSSSMQPSPVSNQS) the composition is skewed to low complexity. Polar residues-rich tracts occupy residues 95-110 (LLSESVASSQLDSTSV) and 120-133 (VQASVSDTAQQPSE). The AN1-type zinc-finger motif lies at 143 to 189 (KQKKNRCFMCRKKVGLTGFECRCGNVYCGVHRYSDVHNCSYNYKADA). Residues C149, C152, C163, C165, C170, H173, H179, and C181 each coordinate Zn(2+). Residue K204 is modified to N6-acetyllysine.

In terms of assembly, interacts with PKN1. Interacts with TRAF2. Interacts with mono- and polyubiquitin. Interacts with PEX6. Interacts with PEX5 (Cys-linked ubiquitinated). In terms of tissue distribution, widely expressed with high level in heart, skeletal muscle, liver, kidney and placenta.

The protein resides in the cytoplasm. Its function is as follows. Involved in regulation of TNF-alpha induced NF-kappa-B activation and apoptosis. Involved in modulation of 'Lys-48'-linked polyubiquitination status of TRAF2 and decreases association of TRAF2 with RIPK1. Required for PTS1 target sequence-dependent protein import into peroxisomes and PEX5 stability; may cooperate with PEX6. In vitro involved in PEX5 export from the cytosol to peroxisomes. The sequence is that of AN1-type zinc finger protein 6 (ZFAND6) from Homo sapiens (Human).